A 280-amino-acid chain; its full sequence is L-aspartate dehydrogenase (280 aa).

Ala134 and Asn202 together coordinate NAD(+). His232 is an active-site residue.

It belongs to the L-aspartate dehydrogenase family.

The catalysed reaction is L-aspartate + NADP(+) + H2O = oxaloacetate + NH4(+) + NADPH + H(+). It carries out the reaction L-aspartate + NAD(+) + H2O = oxaloacetate + NH4(+) + NADH + H(+). The protein operates within cofactor biosynthesis; NAD(+) biosynthesis; iminoaspartate from L-aspartate (dehydrogenase route): step 1/1. Its function is as follows. Specifically catalyzes the NAD or NADP-dependent dehydrogenation of L-aspartate to iminoaspartate. The protein is L-aspartate dehydrogenase of Bradyrhizobium diazoefficiens (strain JCM 10833 / BCRC 13528 / IAM 13628 / NBRC 14792 / USDA 110).